We begin with the raw amino-acid sequence, 99 residues long: Probable small ribosomal subunit protein cS23 (99 aa).

Belongs to the chloroplast-specific ribosomal protein cS23 family. In terms of assembly, part of the 30S ribosomal subunit.

Probably a ribosomal protein or a ribosome-associated protein. This Synechococcus sp. (strain JA-3-3Ab) (Cyanobacteria bacterium Yellowstone A-Prime) protein is Probable small ribosomal subunit protein cS23.